The primary structure comprises 134 residues: Transcriptional activator protein (134 aa).

A Nuclear localization signal motif is present at residues 17 to 31 (KVQHRIAKKTTRRRR). The segment at 36–53 (CGCSYFVALGCHNHGFTH) is a zinc-finger region. The disordered stretch occupies residues 73-103 (KSPVFQDNQTPRETISEEPRHNHNTSPIQLQ). Residues 75–85 (PVFQDNQTPRE) are compositionally biased toward polar residues. The transactivation stretch occupies residues 119–134 (NLDSFTSSDLAFLKSI).

It belongs to the geminiviridae transcriptional activator protein family. In terms of assembly, monomer. Homodimer. Homooligomer. Self-interaction correlates with nuclear localization and efficient activation of transcription. Monomers suppress local silencing by interacting with and inactivating host adenosine kinase 2 (ADK2) in the cytoplasm. Interacts with and inhibits host SNF1 kinase. Binds to ssDNA. May interact with host RPS27A. Phosphorylated.

It localises to the host nucleus. The protein resides in the host cytoplasm. In terms of biological role, multifunctional protein that modulates host antiviral defenses and promotes host attractiveness to insect vectors. Acts as a suppressor of RNA-mediated gene silencing, also known as post-transcriptional gene silencing (PTGS), a mechanism of plant viral defense that limits the accumulation of viral RNAs. TrAP suppresses the host RNA silencing by inhibiting adenosine kinase 2 (ADK2), a kinase involved in a general methylation pathway. Also suppresses the host basal defense by interacting with and inhibiting SNF1 kinase, a key regulator of cell metabolism implicated in innate antiviral defense. Its function is as follows. Inhibits signal transduction by the phytohormone jasmonate, making the infected plant more attractive to aphids, which are the second host to play a role as a dissemination vector. Acts by binding to ubiquitin precursor RPS27A, thereby preventing ubiquitin degradation of JAZ. This Tomato yellow leaf curl China virus (TYLCCNV) protein is Transcriptional activator protein.